Here is a 1131-residue protein sequence, read N- to C-terminus: Tyrosine-protein kinase JAK2 (1131 aa).

Positions 1–239 are interaction with cytokine/interferon/growth hormone receptors; it reads MGMACLTMTE…RYRFRRFIEQ (239 aa). An FERM domain is found at 37–380; that stretch reads PVLQVYLYHS…GYYRLTADAH (344 aa). Y119 is modified (phosphotyrosine; by autocatalysis). Y372 and Y373 each carry phosphotyrosine. The SH2; atypical domain maps to 401–482; it reads HGPISMDFAI…NLKDLLNCYQ (82 aa). At S523 the chain carries Phosphoserine. Residues 545-809 form the Protein kinase 1 domain; sequence LIFNESLGQG…AIIRDLNSLF (265 aa). Phosphotyrosine occurs at positions 570 and 813. The region spanning 849–1126 is the Protein kinase 2 domain; it reads LKFLQQLGKG…RDLALRVDQI (278 aa). Residue 855-863 coordinates ATP; that stretch reads LGKGNFGSV. Phosphotyrosine; by autocatalysis is present on Y868. K882 is an ATP binding site. 2 positions are modified to phosphotyrosine; by autocatalysis: Y966 and Y972. Residue D976 is the Proton acceptor of the active site. Phosphotyrosine; by autocatalysis occurs at positions 1007 and 1008.

It belongs to the protein kinase superfamily. Tyr protein kinase family. JAK subfamily. In terms of assembly, interacts with IL23R, SKB1 and STAM2. Interacts with EPOR. Interacts with LYN. Interacts with SIRPA. Interacts with SH2B1. Interacts with TEC. Interacts with IFNGR2 (via intracellular domain). Interacts with LEPR (Isoform B). Interacts with HSP90AB1; promotes functional activation in a heat shock-dependent manner. Interacts with STRA6. Interacts with ASB2; the interaction targets JAK2 for Notch-induced proteasomal degradation. Requires Mg(2+) as cofactor. In terms of processing, autophosphorylated, leading to regulate its activity. Leptin promotes phosphorylation on tyrosine residues, including phosphorylation on Tyr-813. Autophosphorylation on Tyr-119 in response to EPO down-regulates its kinase activity. Autophosphorylation on Tyr-868, Tyr-966 and Tyr-972 in response to growth hormone (GH) are required for maximal kinase activity. Also phosphorylated by TEC. Phosphorylated on tyrosine residues in response to interferon gamma signaling. Phosphorylated on tyrosine residues in response to a signaling cascade that is activated by increased cellular retinol. Undergoes Notch-induced ubiquitination and subsequent proteasomal degradation which is mediated by ASB1 or ASB2, the substrate-recognition components of probable ECS E3 ubiquitin-protein ligase complexes.

Its subcellular location is the endomembrane system. The protein localises to the cytoplasm. It localises to the nucleus. It carries out the reaction L-tyrosyl-[protein] + ATP = O-phospho-L-tyrosyl-[protein] + ADP + H(+). Regulated by autophosphorylation, can both activate or decrease activity. Heme regulates its activity by enhancing the phosphorylation on Tyr-1007 and Tyr-1008. Non-receptor tyrosine kinase involved in various processes such as cell growth, development, differentiation or histone modifications. Mediates essential signaling events in both innate and adaptive immunity. In the cytoplasm, plays a pivotal role in signal transduction via its association with type I receptors such as growth hormone (GHR), prolactin (PRLR), leptin (LEPR), erythropoietin (EPOR), thrombopoietin (THPO); or type II receptors including IFN-alpha, IFN-beta, IFN-gamma and multiple interleukins. Following ligand-binding to cell surface receptors, phosphorylates specific tyrosine residues on the cytoplasmic tails of the receptor, creating docking sites for STATs proteins. Subsequently, phosphorylates the STATs proteins once they are recruited to the receptor. Phosphorylated STATs then form homodimer or heterodimers and translocate to the nucleus to activate gene transcription. For example, cell stimulation with erythropoietin (EPO) during erythropoiesis leads to JAK2 autophosphorylation, activation, and its association with erythropoietin receptor (EPOR) that becomes phosphorylated in its cytoplasmic domain. Then, STAT5 (STAT5A or STAT5B) is recruited, phosphorylated and activated by JAK2. Once activated, dimerized STAT5 translocates into the nucleus and promotes the transcription of several essential genes involved in the modulation of erythropoiesis. Part of a signaling cascade that is activated by increased cellular retinol and that leads to the activation of STAT5 (STAT5A or STAT5B). In addition, JAK2 mediates angiotensin-2-induced ARHGEF1 phosphorylation. Plays a role in cell cycle by phosphorylating CDKN1B. Cooperates with TEC through reciprocal phosphorylation to mediate cytokine-driven activation of FOS transcription. In the nucleus, plays a key role in chromatin by specifically mediating phosphorylation of 'Tyr-41' of histone H3 (H3Y41ph), a specific tag that promotes exclusion of CBX5 (HP1 alpha) from chromatin. Up-regulates the potassium voltage-gated channel activity of KCNA3. In Sus scrofa (Pig), this protein is Tyrosine-protein kinase JAK2.